A 239-amino-acid chain; its full sequence is Proteasome subunit beta type-6 (239 aa).

Position 2 is an N-acetylalanine (Ala-2). The propeptide at 2–34 (AATLLAARGAGPAPAWGPEAFTPDWESREVSTG) is removed in mature form. The active-site Nucleophile is Thr-35. Thr-69 is subject to Phosphothreonine.

The protein belongs to the peptidase T1B family. As to quaternary structure, the 26S proteasome consists of a 20S proteasome core and two 19S regulatory subunits. The 20S proteasome core is a barrel-shaped complex made of 28 subunits that are arranged in four stacked rings. The two outer rings are each formed by seven alpha subunits, and the two inner rings are formed by seven beta subunits. The proteolytic activity is exerted by three beta-subunits PSMB5, PSMB6 and PSMB7. In terms of assembly, (Microbial infection) Interacts with HIV-1 protein Tat.

The protein resides in the cytoplasm. Its subcellular location is the nucleus. The catalysed reaction is Cleavage of peptide bonds with very broad specificity.. Its function is as follows. Component of the 20S core proteasome complex involved in the proteolytic degradation of most intracellular proteins. This complex plays numerous essential roles within the cell by associating with different regulatory particles. Associated with two 19S regulatory particles, forms the 26S proteasome and thus participates in the ATP-dependent degradation of ubiquitinated proteins. The 26S proteasome plays a key role in the maintenance of protein homeostasis by removing misfolded or damaged proteins that could impair cellular functions, and by removing proteins whose functions are no longer required. Associated with the PA200 or PA28, the 20S proteasome mediates ubiquitin-independent protein degradation. This type of proteolysis is required in several pathways including spermatogenesis (20S-PA200 complex) or generation of a subset of MHC class I-presented antigenic peptides (20S-PA28 complex). Within the 20S core complex, PSMB6 displays a peptidylglutamyl-hydrolizing activity also termed postacidic or caspase-like activity, meaning that the peptides bond hydrolysis occurs directly after acidic residues. The polypeptide is Proteasome subunit beta type-6 (Homo sapiens (Human)).